The following is a 76-amino-acid chain: U10-ctenitoxin-Pn1a (76 aa).

Residues 1 to 15 (SFVFYLFTLITVVRA) form the signal peptide. The propeptide occupies 16–36 (EEFILENEAEDIAPAVHGESG). Cystine bridges form between Cys-39/Cys-54, Cys-46/Cys-59, Cys-53/Cys-73, and Cys-61/Cys-71.

It belongs to the neurotoxin 02 (plectoxin) family. 09 subfamily. As to expression, expressed by the venom gland.

The protein resides in the secreted. This Phoneutria nigriventer (Brazilian armed spider) protein is U10-ctenitoxin-Pn1a.